Reading from the N-terminus, the 180-residue chain is Pro-glucagon (180 aa).

The signal sequence occupies residues 1 to 20; it reads MKSLYFVAGLFVMLVQGSWQ. Positions 25–35 are enriched in polar residues; sequence NTEEKSSSFPA. The tract at residues 25 to 59 is disordered; sequence NTEEKSSSFPAPQTDPLGDPDQINEDKRHSQGTFT. Position 54 is a phosphoserine (serine 54). Residues 84-89 constitute a propeptide that is removed on maturation; that stretch reads NKNNIA. Residues serine 105 and serine 108 each carry the phosphoserine modification. An Arginine amide modification is found at arginine 127. A propeptide spanning residues 131 to 145 is cleaved from the precursor; it reads DFPEEVNIVEELRRR. Residues serine 150 and serine 152 each carry the phosphoserine modification.

This sequence belongs to the glucagon family. In terms of processing, proglucagon is post-translationally processed in a tissue-specific manner in pancreatic A cells and intestinal L cells. In pancreatic A cells, the major bioactive hormone is glucagon cleaved by PCSK2/PC2. In the intestinal L cells PCSK1/PC1 liberates GLP-1, GLP-2, glicentin and oxyntomodulin. GLP-1 is further N-terminally truncated by post-translational processing in the intestinal L cells resulting in GLP-1(7-37) GLP-1-(7-36)amide. The C-terminal amidation is neither important for the metabolism of GLP-1 nor for its effects on the endocrine pancreas. As to expression, glucagon is secreted in the A cells of the islets of Langerhans. GLP-1, GLP-2, oxyntomodulin and glicentin are secreted from enteroendocrine cells throughout the gastrointestinal tract.

The protein localises to the secreted. In terms of biological role, plays a key role in glucose metabolism and homeostasis. Regulates blood glucose by increasing gluconeogenesis and decreasing glycolysis. A counterregulatory hormone of insulin, raises plasma glucose levels in response to insulin-induced hypoglycemia. Plays an important role in initiating and maintaining hyperglycemic conditions in diabetes. Potent stimulator of glucose-dependent insulin release. Also stimulates insulin release in response to IL6. Plays important roles on gastric motility and the suppression of plasma glucagon levels. May be involved in the suppression of satiety and stimulation of glucose disposal in peripheral tissues, independent of the actions of insulin. Has growth-promoting activities on intestinal epithelium. May also regulate the hypothalamic pituitary axis (HPA) via effects on LH, TSH, CRH, oxytocin, and vasopressin secretion. Increases islet mass through stimulation of islet neogenesis and pancreatic beta cell proliferation. Inhibits beta cell apoptosis. Functionally, stimulates intestinal growth and up-regulates villus height in the small intestine, concomitant with increased crypt cell proliferation and decreased enterocyte apoptosis. The gastrointestinal tract, from the stomach to the colon is the principal target for GLP-2 action. Plays a key role in nutrient homeostasis, enhancing nutrient assimilation through enhanced gastrointestinal function, as well as increasing nutrient disposal. Stimulates intestinal glucose transport and decreases mucosal permeability. Its function is as follows. Significantly reduces food intake. Inhibits gastric emptying in humans. Suppression of gastric emptying may lead to increased gastric distension, which may contribute to satiety by causing a sensation of fullness. In terms of biological role, may modulate gastric acid secretion and the gastro-pyloro-duodenal activity. May play an important role in intestinal mucosal growth in the early period of life. The protein is Pro-glucagon (GCG) of Bos taurus (Bovine).